A 60-amino-acid chain; its full sequence is Metallothionein-like protein EMB30 (60 aa).

Belongs to the metallothionein superfamily. Type 15 family.

Its function is as follows. Metallothioneins have a high content of cysteine residues that bind various heavy metals. This chain is Metallothionein-like protein EMB30 (EMB30), found in Picea glauca (White spruce).